The following is a 33-amino-acid chain: uncharacterized protein (33 aa).

A disordered region spans residues 1–33 (MQPGTGLSFDISQILKQGSDPKQKLPERQAIVL).

This is an uncharacterized protein from Caenorhabditis elegans.